A 339-amino-acid chain; its full sequence is Glycerol-3-phosphate dehydrogenase [NAD(P)+] (339 aa).

S15, Y16, H36, and K110 together coordinate NADPH. Positions 110, 139, and 141 each coordinate sn-glycerol 3-phosphate. A143 provides a ligand contact to NADPH. K195, D248, S258, R259, and N260 together coordinate sn-glycerol 3-phosphate. Residue K195 is the Proton acceptor of the active site. R259 is an NADPH binding site. NADPH-binding residues include V283 and E285.

It belongs to the NAD-dependent glycerol-3-phosphate dehydrogenase family.

The protein localises to the cytoplasm. The enzyme catalyses sn-glycerol 3-phosphate + NAD(+) = dihydroxyacetone phosphate + NADH + H(+). It carries out the reaction sn-glycerol 3-phosphate + NADP(+) = dihydroxyacetone phosphate + NADPH + H(+). It functions in the pathway membrane lipid metabolism; glycerophospholipid metabolism. In terms of biological role, catalyzes the reduction of the glycolytic intermediate dihydroxyacetone phosphate (DHAP) to sn-glycerol 3-phosphate (G3P), the key precursor for phospholipid synthesis. In Klebsiella pneumoniae (strain 342), this protein is Glycerol-3-phosphate dehydrogenase [NAD(P)+].